We begin with the raw amino-acid sequence, 291 residues long: Pyridoxal 5'-phosphate synthase subunit PdxS (291 aa).

Asp-23 serves as a coordination point for D-ribose 5-phosphate. The Schiff-base intermediate with D-ribose 5-phosphate role is filled by Lys-80. Position 152 (Gly-152) interacts with D-ribose 5-phosphate. Arg-164 contacts D-glyceraldehyde 3-phosphate. D-ribose 5-phosphate is bound by residues Gly-213 and 234-235 (GS).

The protein belongs to the PdxS/SNZ family. In terms of assembly, in the presence of PdxT, forms a dodecamer of heterodimers.

It catalyses the reaction aldehydo-D-ribose 5-phosphate + D-glyceraldehyde 3-phosphate + L-glutamine = pyridoxal 5'-phosphate + L-glutamate + phosphate + 3 H2O + H(+). Its pathway is cofactor biosynthesis; pyridoxal 5'-phosphate biosynthesis. Functionally, catalyzes the formation of pyridoxal 5'-phosphate from ribose 5-phosphate (RBP), glyceraldehyde 3-phosphate (G3P) and ammonia. The ammonia is provided by the PdxT subunit. Can also use ribulose 5-phosphate and dihydroxyacetone phosphate as substrates, resulting from enzyme-catalyzed isomerization of RBP and G3P, respectively. The protein is Pyridoxal 5'-phosphate synthase subunit PdxS of Streptococcus pneumoniae (strain P1031).